Reading from the N-terminus, the 420-residue chain is UDP-glucuronic acid decarboxylase 1 (420 aa).

Residue methionine 1 is modified to N-acetylmethionine. The Cytoplasmic portion of the chain corresponds to 1-19 (MVSKGLLRLVSSVNRRKMK). The chain crosses the membrane as a helical; Signal-anchor for type II membrane protein span at residues 20–40 (LLLGIALFAYAASVWGNFVNM). At 41 to 420 (RSIQENGELK…RVKKGRTRHS (380 aa)) the chain is on the lumenal side. Residue threonine 94 is modified to Phosphothreonine. Residues glycine 98, phenylalanine 99, valine 100, aspartate 119, asparagine 120, phenylalanine 122, threonine 123, glycine 124, aspartate 144, and valine 145 each coordinate NAD(+). 2 residues coordinate UDP-alpha-D-glucuronate: leucine 149 and tyrosine 150. The NAD(+) site is built by leucine 159 and serine 161. Lysine 177 serves as a coordination point for UDP-alpha-D-glucuronate. Threonine 178 contacts NAD(+). Residues asparagine 185, glycine 188, lysine 191, and arginine 192 each coordinate UDP-alpha-D-glucuronate. 3 residues coordinate NAD(+): alanine 200, tyrosine 231, and lysine 235. The Proton acceptor role is filled by tyrosine 231. The UDP-alpha-D-glucuronate site is built by tyrosine 245, glutamine 248, and glutamate 249. NAD(+) is bound by residues threonine 261, histidine 267, and arginine 272. Asparagine 316 is a glycosylation site (N-linked (GlcNAc...) asparagine).

This sequence belongs to the NAD(P)-dependent epimerase/dehydratase family. UDP-glucuronic acid decarboxylase subfamily. As to quaternary structure, homodimer and homotetramer. Interacts with AKT1. It depends on NAD(+) as a cofactor. As to expression, ubiquitous. Detected in heart, brain, spleen, lung, testis, liver, skeletal muscle and kidney.

Its subcellular location is the golgi apparatus. It is found in the golgi stack membrane. The enzyme catalyses UDP-alpha-D-glucuronate + H(+) = UDP-alpha-D-xylose + CO2. It participates in nucleotide-sugar biosynthesis; UDP-alpha-D-xylose biosynthesis; UDP-alpha-D-xylose from UDP-alpha-D-glucuronate: step 1/1. Functionally, catalyzes the NAD-dependent decarboxylation of UDP-glucuronic acid to UDP-xylose. Necessary for the biosynthesis of the core tetrasaccharide in glycosaminoglycan biosynthesis. The sequence is that of UDP-glucuronic acid decarboxylase 1 from Rattus norvegicus (Rat).